Reading from the N-terminus, the 551-residue chain is MAAPVRLGRKRPLPACPNPLFVRWLTEWRDEATRSRRRTRFVFQKALRSLRRYPLPLRSGKEAKILQHFGDGLCRMLDERLQRHRTSGGDHAPDSPSGENSPAPQGRLAEVQDSSMPVPAQPKAGGSGSYWPARHSGARVILLVLYREHLNPNGHHFLTKEELLQRCAQKSPRVAPGSARPWPALRSLLHRNLVLRTHQPARYSLTPEGLELAQKLAESEGLSLLNVGIGPKEPPGEETAVPGAASAELASEAGVQQQPLELRPGEYRVLLCVDIGETRGGGHRPELLRELQRLHVTHTVRKLHVGDFVWVAQETNPRDPANPGELVLDHIVERKRLDDLCSSIIDGRFREQKFRLKRCGLERRVYLVEEHGSVHNLSLPESTLLQAVTNTQVIDGFFVKRTADIKESAAYLALLTRGLQRLYQGHTLRSRPWGTPGNPESGAMTSPNPLCSLLTFSDFNAGAIKNKAQSVREVFARQLMQVRGVSGEKAAALVDRYSTPASLLAAYDACATPKEQETLLSTIKCGRLQRNLGPALSRTLSQLYCSYGPLT.

Residues histidine 84–proline 93 are compositionally biased toward basic and acidic residues. Positions histidine 84–tyrosine 130 are disordered. Phosphoserine occurs at positions 95 and 101. An interaction with BLM region spans residues glycine 125 to alanine 244. The interval tryptophan 131–glycine 230 is winged helix domain (WHD); critical for endonuclease activity. The region spanning leucine 270–glycine 372 is the ERCC4 domain. Active-site residues include aspartate 274, glutamate 277, and aspartate 307. Mg(2+) contacts are provided by aspartate 274, glutamate 277, aspartate 307, glutamate 333, and arginine 334. The interval valine 471 to cysteine 545 is helix-hairpin-helix (2HhH); involved in DNA recognition and bending.

This sequence belongs to the XPF family. As to quaternary structure, part of the heterodimeric DNA structure-specific endonuclease complex MUS81-EME1. Part of the heterodimeric DNA structure-specific endonuclease complex MUS81-EME2. Interacts with BLM; may stimulate the endonuclease activity of MUS81. Interacts with SLX4/BTBD12; this interaction is direct and links the MUS81-EME1 complex to SLX4, which may coordinate the action of the structure-specific endonuclease during DNA repair. Interacts with DCLRE1B/Apollo. Interacts with RECQL5; this interaction stimulates mitotic DNA synthesis. Interacts with CHEK2. Mg(2+) serves as cofactor. Widely expressed.

Its subcellular location is the nucleus. The protein resides in the nucleolus. In terms of biological role, catalytic subunit of two functionally distinct, structure-specific, heterodimeric DNA endonucleases MUS81-EME1 and MUS81-EME2 that are involved in the maintenance of genome stability. Both endonucleases have essentially the same substrate specificity though MUS81-EME2 is more active than its MUS81-EME1 counterpart. Both cleave 3'-flaps and nicked Holliday junctions, and exhibit limited endonuclease activity with 5' flaps and nicked double-stranded DNAs. MUS81-EME2 which is active during the replication of DNA is more specifically involved in replication fork processing. Replication forks frequently encounter obstacles to their passage, including DNA base lesions, DNA interstrand cross-links, difficult-to-replicate sequences, transcription bubbles, or tightly bound proteins. One mechanism for the restart of a stalled replication fork involves nucleolytic cleavage mediated by the MUS81-EME2 endonuclease. By acting upon the stalled fork, MUS81-EME2 generates a DNA double-strand break (DSB) that can be repaired by homologous recombination, leading to the restoration of an active fork. MUS81-EME2 could also function in telomere maintenance. MUS81-EME1, on the other hand, is active later in the cell cycle and functions in the resolution of mitotic recombination intermediates including the Holliday junctions, the four-way DNA intermediates that form during homologous recombination. This chain is Structure-specific endonuclease subunit MUS81, found in Homo sapiens (Human).